A 42-amino-acid chain; its full sequence is Photosystem I reaction center subunit IX (42 aa).

The helical transmembrane segment at Y7–I27 threads the bilayer.

This sequence belongs to the PsaJ family.

It localises to the plastid. It is found in the chloroplast thylakoid membrane. In terms of biological role, may help in the organization of the PsaE and PsaF subunits. In Daucus carota (Wild carrot), this protein is Photosystem I reaction center subunit IX.